The chain runs to 160 residues: 2-C-methyl-D-erythritol 2,4-cyclodiphosphate synthase (160 aa).

Residues D9 and H11 each contribute to the a divalent metal cation site. Residues 9 to 11 (DVH) and 35 to 36 (HS) each bind 4-CDP-2-C-methyl-D-erythritol 2-phosphate. H43 contributes to the a divalent metal cation binding site. Residues 57–59 (DIG), 62–66 (FPDTD), 133–136 (TTTE), F140, and R143 contribute to the 4-CDP-2-C-methyl-D-erythritol 2-phosphate site.

The protein belongs to the IspF family. As to quaternary structure, homotrimer. The cofactor is a divalent metal cation.

The catalysed reaction is 4-CDP-2-C-methyl-D-erythritol 2-phosphate = 2-C-methyl-D-erythritol 2,4-cyclic diphosphate + CMP. It functions in the pathway isoprenoid biosynthesis; isopentenyl diphosphate biosynthesis via DXP pathway; isopentenyl diphosphate from 1-deoxy-D-xylulose 5-phosphate: step 4/6. In terms of biological role, involved in the biosynthesis of isopentenyl diphosphate (IPP) and dimethylallyl diphosphate (DMAPP), two major building blocks of isoprenoid compounds. Catalyzes the conversion of 4-diphosphocytidyl-2-C-methyl-D-erythritol 2-phosphate (CDP-ME2P) to 2-C-methyl-D-erythritol 2,4-cyclodiphosphate (ME-CPP) with a corresponding release of cytidine 5-monophosphate (CMP). This is 2-C-methyl-D-erythritol 2,4-cyclodiphosphate synthase from Haemophilus ducreyi (strain 35000HP / ATCC 700724).